The chain runs to 157 residues: SsrA-binding protein (157 aa).

This sequence belongs to the SmpB family.

It localises to the cytoplasm. Its function is as follows. Required for rescue of stalled ribosomes mediated by trans-translation. Binds to transfer-messenger RNA (tmRNA), required for stable association of tmRNA with ribosomes. tmRNA and SmpB together mimic tRNA shape, replacing the anticodon stem-loop with SmpB. tmRNA is encoded by the ssrA gene; the 2 termini fold to resemble tRNA(Ala) and it encodes a 'tag peptide', a short internal open reading frame. During trans-translation Ala-aminoacylated tmRNA acts like a tRNA, entering the A-site of stalled ribosomes, displacing the stalled mRNA. The ribosome then switches to translate the ORF on the tmRNA; the nascent peptide is terminated with the 'tag peptide' encoded by the tmRNA and targeted for degradation. The ribosome is freed to recommence translation, which seems to be the essential function of trans-translation. In Chlorobium chlorochromatii (strain CaD3), this protein is SsrA-binding protein.